We begin with the raw amino-acid sequence, 397 residues long: Phosphoglycerate kinase (397 aa).

Residues 25–27, arginine 41, 64–67, arginine 118, and arginine 151 each bind substrate; these read DLN and HLGR. ATP is bound by residues lysine 202, glutamate 324, and 350–353; that span reads GGDT.

The protein belongs to the phosphoglycerate kinase family. In terms of assembly, monomer.

It is found in the cytoplasm. It catalyses the reaction (2R)-3-phosphoglycerate + ATP = (2R)-3-phospho-glyceroyl phosphate + ADP. Its pathway is carbohydrate degradation; glycolysis; pyruvate from D-glyceraldehyde 3-phosphate: step 2/5. This is Phosphoglycerate kinase from Leptothrix cholodnii (strain ATCC 51168 / LMG 8142 / SP-6) (Leptothrix discophora (strain SP-6)).